We begin with the raw amino-acid sequence, 154 residues long: Xanthine-guanine phosphoribosyltransferase (154 aa).

Residues 37 to 38 (RG), Arg69, and 88 to 96 (DDLVDSGDT) each bind 5-phospho-alpha-D-ribose 1-diphosphate. Arg69 contacts GMP. Asp89 is a binding site for Mg(2+). 2 residues coordinate guanine: Asp92 and Ile135. Positions 92 and 135 each coordinate xanthine. Residues 92–96 (DSGDT) and 134–135 (WI) contribute to the GMP site.

It belongs to the purine/pyrimidine phosphoribosyltransferase family. XGPT subfamily. Homotetramer. Mg(2+) is required as a cofactor.

The protein resides in the cell inner membrane. It catalyses the reaction GMP + diphosphate = guanine + 5-phospho-alpha-D-ribose 1-diphosphate. The enzyme catalyses XMP + diphosphate = xanthine + 5-phospho-alpha-D-ribose 1-diphosphate. It carries out the reaction IMP + diphosphate = hypoxanthine + 5-phospho-alpha-D-ribose 1-diphosphate. Its pathway is purine metabolism; GMP biosynthesis via salvage pathway; GMP from guanine: step 1/1. It functions in the pathway purine metabolism; XMP biosynthesis via salvage pathway; XMP from xanthine: step 1/1. Purine salvage pathway enzyme that catalyzes the transfer of the ribosyl-5-phosphate group from 5-phospho-alpha-D-ribose 1-diphosphate (PRPP) to the N9 position of the 6-oxopurines guanine and xanthine to form the corresponding ribonucleotides GMP (guanosine 5'-monophosphate) and XMP (xanthosine 5'-monophosphate), with the release of PPi. To a lesser extent, also acts on hypoxanthine. In Vibrio cholerae serotype O1 (strain ATCC 39541 / Classical Ogawa 395 / O395), this protein is Xanthine-guanine phosphoribosyltransferase.